The following is a 130-amino-acid chain: Large ribosomal subunit protein uL14 (130 aa).

It belongs to the universal ribosomal protein uL14 family. As to quaternary structure, part of the 50S ribosomal subunit. Forms a cluster with proteins L3 and L19. In the 70S ribosome, L14 and L19 interact and together make contacts with the 16S rRNA in bridges B5 and B8.

Functionally, binds to 23S rRNA. Forms part of two intersubunit bridges in the 70S ribosome. The chain is Large ribosomal subunit protein uL14 from Leptospira interrogans serogroup Icterohaemorrhagiae serovar copenhageni (strain Fiocruz L1-130).